We begin with the raw amino-acid sequence, 318 residues long: Quinolinate synthase (318 aa).

Iminosuccinate contacts are provided by His-34 and Ser-51. Cys-96 is a [4Fe-4S] cluster binding site. Iminosuccinate contacts are provided by residues 122–124 and Ser-139; that span reads YIN. Residue Cys-182 participates in [4Fe-4S] cluster binding. Iminosuccinate is bound by residues 208 to 210 and Thr-225; that span reads HPE. A [4Fe-4S] cluster-binding site is contributed by Cys-275.

It belongs to the quinolinate synthase family. Type 2 subfamily. The cofactor is [4Fe-4S] cluster.

The protein localises to the cytoplasm. It catalyses the reaction iminosuccinate + dihydroxyacetone phosphate = quinolinate + phosphate + 2 H2O + H(+). The protein operates within cofactor biosynthesis; NAD(+) biosynthesis; quinolinate from iminoaspartate: step 1/1. Its function is as follows. Catalyzes the condensation of iminoaspartate with dihydroxyacetone phosphate to form quinolinate. In Synechocystis sp. (strain ATCC 27184 / PCC 6803 / Kazusa), this protein is Quinolinate synthase.